The primary structure comprises 497 residues: O-acetyltransferase PaAT-1 (497 aa).

Residue Asn35 is glycosylated (N-linked (GlcNAc...) asparagine). 9 helical membrane-spanning segments follow: residues Gly69–Ile89, Leu107–Ser127, Leu157–Tyr177, Leu241–Phe261, Val278–Ile298, Ala329–Phe349, Pro375–Phe395, Ile406–Gly426, and Val443–Val463.

The protein belongs to the acyltransferase 3 family.

It localises to the membrane. Its pathway is mycotoxin biosynthesis. Functionally, O-acetyltransferase; part of the 2 gene clusters that mediate the biosynthesis of fusicoccins, diterpene glucosides that display phytohormone-like activity and function as potent activators of plasma membrane H(+)-ATPases in plants by modifying 14-3-3 proteins and cause the plant disease constriction canker. The first step in the pathway is performed by the fusicoccadiene synthase PaFS that possesses both prenyl transferase and terpene cyclase activity, converting isopentenyl diphosphate and dimethylallyl diphosphate into geranylgeranyl diphosphate (GGDP) and successively converting GGDP into fusicocca-2,10(14)-diene, a precursor for fusicoccin H. The second step is the oxidation at the C-8 position by the cytochrome P450 monooxygenase PaP450-2 to yield fusicocca-2,10(14)-diene-8-beta-ol. The cytochrome P450 monooxygenase PaP450-1 then catalyzes the hydroxylation at the C-16 position to produce fusicocca-2,10(14)-diene-8-beta,16-diol. The dioxygenase fc-dox then catalyzes the 16-oxydation of fusicocca-2,10(14)-diene-8-beta,16-diol to yield an aldehyde (8-beta-hydroxyfusicocca-1,10(14)-dien-16-al). The short-chain dehydrogenase/reductase fc-sdr catalyzes the reduction of the aldehyde to yield fusicocca-1,10(14)-diene-8-beta,16-diol. The next step is the hydroxylation at C-9 performed by the cytochrome P450 monooxygenase PaP450-3 that leads to fusicoccin H aglycon which is glycosylated to fusicoccin H by the O-glycosyltransferase PaGT. Hydroxylation at C-12 by the cytochrome P450 monooxygenase PaP450-4 leads then to the production of fusicoccin Q and is followed by methylation by the O-methyltransferase PaMT to yield fusicoccin P. Fusicoccin P is further converted to fusicoccin J via prenylation by the O-glucose prenyltransferase PaPT. Cytochrome P450 monooxygenase PaP450-5 then performs hydroxylation at C-19 to yield dideacetyl-fusicoccin A which is acetylated to 3'-O-deacetyl-fusicoccin A by the O-acetyltransferase PaAT-2. Finally, a another acetylation by the O-acetyltransferase PaAT-1 yields fusicoccin A. The polypeptide is O-acetyltransferase PaAT-1 (Phomopsis amygdali (Fusicoccum amygdali)).